The primary structure comprises 406 residues: Putative phosphate permease PH0640 (406 aa).

The next 11 membrane-spanning stretches (helical) occupy residues 2 to 22, 45 to 65, 83 to 103, 114 to 134, 140 to 160, 182 to 202, 207 to 227, 265 to 285, 288 to 308, 330 to 350, and 385 to 405; these read IPID…AWAI, AVLI…KTVT, VLIY…IIAT, SIIG…IVNW, VVLS…LVFR, FWIG…VLHG, IGIL…TSML, VANA…GLAG, VPVP…GVAT, FTID…GMPI, and FVTV…LLLI.

This sequence belongs to the inorganic phosphate transporter (PiT) (TC 2.A.20) family.

The protein resides in the cell membrane. Functionally, potential transporter for phosphate. This is Putative phosphate permease PH0640 from Pyrococcus horikoshii (strain ATCC 700860 / DSM 12428 / JCM 9974 / NBRC 100139 / OT-3).